A 100-amino-acid chain; its full sequence is Integration host factor subunit beta (100 aa).

The tract at residues 53–100 (LHHRPPRIGRNPKTGEPVALPGKYVPHFKPGKELRDRVNAGRHNPIQS) is disordered. Over residues 82–91 (PGKELRDRVN) the composition is skewed to basic and acidic residues.

It belongs to the bacterial histone-like protein family. Heterodimer of an alpha and a beta chain.

Its function is as follows. This protein is one of the two subunits of integration host factor, a specific DNA-binding protein that functions in genetic recombination as well as in transcriptional and translational control. The sequence is that of Integration host factor subunit beta from Alkalilimnicola ehrlichii (strain ATCC BAA-1101 / DSM 17681 / MLHE-1).